Consider the following 876-residue polypeptide: Leucine--tRNA ligase (876 aa).

The 'HIGH' region signature appears at 42–52 (PYPSGKLHMGH). The short motif at 634-638 (KMSKS) is the 'KMSKS' region element. Lys637 is a binding site for ATP.

It belongs to the class-I aminoacyl-tRNA synthetase family.

The protein resides in the cytoplasm. The enzyme catalyses tRNA(Leu) + L-leucine + ATP = L-leucyl-tRNA(Leu) + AMP + diphosphate. The chain is Leucine--tRNA ligase from Neisseria meningitidis serogroup B (strain ATCC BAA-335 / MC58).